Reading from the N-terminus, the 81-residue chain is N.vectensis toxin 4 (81 aa).

An N-terminal signal peptide occupies residues 1-20; it reads MRSSWMFVICFAMLILYTNG. 3 disulfides stabilise this stretch: cysteine 46/cysteine 75, cysteine 48/cysteine 70, and cysteine 63/cysteine 76.

Expressed in ectodermal gland cells. In adult female tissues, highly transcribed in mesenteries (gametes-producing tissue) and slightly transcribed in tentacles, pharynx and physa.

Its function is as follows. Has toxic effects on zebrafish larvae. It causes contractile paralysis and twitching of the tail within 30 minutes, followed by death within 40 minutes. Does not show any toxicity when injected into arthropods (cherry shrimps or grass shrimps). In Nematostella vectensis (Starlet sea anemone), this protein is N.vectensis toxin 4.